Consider the following 334-residue polypeptide: Holliday junction branch migration complex subunit RuvB (334 aa).

The interval 4–184 is large ATPase domain (RuvB-L); that stretch reads ADRLISAAVI…FGIVQRLEFY (181 aa). ATP contacts are provided by residues Ile23, Arg24, Gly65, Lys68, Thr69, Thr70, 131-133, Arg174, Tyr184, and Arg221; that span reads EDY. Thr69 contributes to the Mg(2+) binding site. The interval 185 to 255 is small ATPAse domain (RuvB-S); that stretch reads QVADLEHIVS…VAMKALDMLN (71 aa). A head domain (RuvB-H) region spans residues 258–334; the sequence is AEGFDFMDRK…YKHFGITREE (77 aa). Positions 294, 313, and 318 each coordinate DNA.

It belongs to the RuvB family. In terms of assembly, homohexamer. Forms an RuvA(8)-RuvB(12)-Holliday junction (HJ) complex. HJ DNA is sandwiched between 2 RuvA tetramers; dsDNA enters through RuvA and exits via RuvB. An RuvB hexamer assembles on each DNA strand where it exits the tetramer. Each RuvB hexamer is contacted by two RuvA subunits (via domain III) on 2 adjacent RuvB subunits; this complex drives branch migration. In the full resolvosome a probable DNA-RuvA(4)-RuvB(12)-RuvC(2) complex forms which resolves the HJ.

The protein resides in the cytoplasm. It carries out the reaction ATP + H2O = ADP + phosphate + H(+). Its function is as follows. The RuvA-RuvB-RuvC complex processes Holliday junction (HJ) DNA during genetic recombination and DNA repair, while the RuvA-RuvB complex plays an important role in the rescue of blocked DNA replication forks via replication fork reversal (RFR). RuvA specifically binds to HJ cruciform DNA, conferring on it an open structure. The RuvB hexamer acts as an ATP-dependent pump, pulling dsDNA into and through the RuvAB complex. RuvB forms 2 homohexamers on either side of HJ DNA bound by 1 or 2 RuvA tetramers; 4 subunits per hexamer contact DNA at a time. Coordinated motions by a converter formed by DNA-disengaged RuvB subunits stimulates ATP hydrolysis and nucleotide exchange. Immobilization of the converter enables RuvB to convert the ATP-contained energy into a lever motion, pulling 2 nucleotides of DNA out of the RuvA tetramer per ATP hydrolyzed, thus driving DNA branch migration. The RuvB motors rotate together with the DNA substrate, which together with the progressing nucleotide cycle form the mechanistic basis for DNA recombination by continuous HJ branch migration. Branch migration allows RuvC to scan DNA until it finds its consensus sequence, where it cleaves and resolves cruciform DNA. This Yersinia pseudotuberculosis serotype O:1b (strain IP 31758) protein is Holliday junction branch migration complex subunit RuvB.